The primary structure comprises 354 residues: Protein RecA (354 aa).

Position 67–74 (67–74 (GPESSGKT)) interacts with ATP.

It belongs to the RecA family.

The protein resides in the cytoplasm. Functionally, can catalyze the hydrolysis of ATP in the presence of single-stranded DNA, the ATP-dependent uptake of single-stranded DNA by duplex DNA, and the ATP-dependent hybridization of homologous single-stranded DNAs. It interacts with LexA causing its activation and leading to its autocatalytic cleavage. This Chlamydia muridarum (strain MoPn / Nigg) protein is Protein RecA.